A 170-amino-acid polypeptide reads, in one-letter code: Adenine phosphoribosyltransferase (170 aa).

The protein belongs to the purine/pyrimidine phosphoribosyltransferase family. As to quaternary structure, homodimer.

It localises to the cytoplasm. The enzyme catalyses AMP + diphosphate = 5-phospho-alpha-D-ribose 1-diphosphate + adenine. It functions in the pathway purine metabolism; AMP biosynthesis via salvage pathway; AMP from adenine: step 1/1. Its function is as follows. Catalyzes a salvage reaction resulting in the formation of AMP, that is energically less costly than de novo synthesis. The protein is Adenine phosphoribosyltransferase of Bacillus anthracis (strain A0248).